Reading from the N-terminus, the 385-residue chain is Actin-2 (385 aa).

This sequence belongs to the actin family. ARP1 subfamily.

The protein localises to the cytoplasm. Its subcellular location is the cytoskeleton. This is Actin-2 from Pneumocystis carinii.